Reading from the N-terminus, the 417-residue chain is Phosphoglycerate kinase 1 (417 aa).

N-acetylserine is present on serine 2. Residues serine 2 and serine 4 each carry the phosphoserine modification. N6-succinyllysine is present on lysine 6. At lysine 11 the chain carries N6-acetyllysine. 6 residues coordinate (2R)-3-phosphoglycerate: valine 23, aspartate 24, phenylalanine 25, asparagine 26, glutamine 38, and arginine 39. The segment at glutamine 38–alanine 43 is mitochondrial targeting region exposed following cis-trans isomerization by PIN1 and recognized by the TOM complex for mitochondrial translocation of the protein. Lysine 48 carries the N6-acetyllysine; alternate modification. An N6-succinyllysine; alternate modification is found at lysine 48. 4 residues coordinate (2R)-3-phosphoglycerate: serine 62, histidine 63, glycine 65, and arginine 66. Lysine 75 carries the post-translational modification N6-acetyllysine. A Phosphotyrosine modification is found at tyrosine 76. 2 positions are modified to N6-acetyllysine: lysine 86 and lysine 91. At lysine 97 the chain carries N6-acetyllysine; alternate. An N6-(2-hydroxyisobutyryl)lysine; alternate modification is found at lysine 97. (2R)-3-phosphoglycerate is bound by residues leucine 122 and arginine 123. Lysine 131 is modified (N6-acetyllysine; alternate). An N6-malonyllysine; alternate modification is found at lysine 131. Lysine 146 bears the N6-acetyllysine mark. (2R)-3-phosphoglycerate contacts are provided by histidine 170 and arginine 171. Lysine 191 carries the post-translational modification N6-succinyllysine. Tyrosine 196 carries the post-translational modification Phosphotyrosine. Lysine 199 is subject to N6-acetyllysine. Serine 203 carries the post-translational modification Phosphoserine. ADP is bound at residue glycine 214. Glycine 214 serves as a coordination point for CDP. Alanine 215 and lysine 216 together coordinate AMP. Residue alanine 215 participates in ATP binding. Alanine 215 contacts Mg(2+). N6-(2-hydroxyisobutyryl)lysine is present on lysine 216. 2 residues coordinate Mg(2+): alanine 218 and aspartate 219. Aspartate 219 serves as a coordination point for CDP. Lysine 220 provides a ligand contact to AMP. Residue lysine 220 coordinates ATP. Lysine 220 is modified (N6-(2-hydroxyisobutyryl)lysine). Residue glycine 238 participates in ADP binding. Position 238 (glycine 238) interacts with CDP. Position 239 (glycine 239) interacts with AMP. Glycine 239 is an ATP binding site. N6-acetyllysine is present on residues lysine 267 and lysine 291. Glycine 313 is an AMP binding site. Position 313 (glycine 313) interacts with ATP. An N6-(2-hydroxyisobutyryl)lysine modification is found at lysine 323. CDP contacts are provided by glycine 338, valine 340, and phenylalanine 343. Phenylalanine 343 contacts ADP. Position 344 (glutamate 344) interacts with AMP. Glutamate 344 is a binding site for ATP. Lysine 361 carries the N6-acetyllysine modification. 2 residues coordinate ATP: aspartate 375 and threonine 376. Aspartate 375 serves as a coordination point for Mg(2+).

Belongs to the phosphoglycerate kinase family. Monomer. Interacts with kinase MAPK1/ERK2; the interaction is direct, occurs under hypoxic conditions, and promotes its interaction with PIN1. Interacts with peptidyl-prolyl cis-trans isomerase PIN1; the interaction is direct, occurs under hypoxic conditions, and targets the protein to the mitochondrion by promoting interactions with the TOM complex. Interacts with mitochondrial circRNA mcPGK1 (via its 2nd stem-loop); the interaction is direct and targets the protein to the mitochondrion by promoting interactions with the TOM complex. Interacts with pyruvate dehydrogenase kinase PDK1; the interaction is direct, occurs under hypoxic conditions and leads to PDK1-mediated inhibition of pyruvate dehydrogenase complex activity. Mg(2+) serves as cofactor. Post-translationally, phosphorylated at Ser-203 by MAPK1/ERK2 under hypoxic conditions, which promotes its mitochondrial targeting.

It is found in the cytoplasm. The protein resides in the cytosol. It localises to the mitochondrion matrix. It catalyses the reaction (2R)-3-phosphoglycerate + ATP = (2R)-3-phospho-glyceroyl phosphate + ADP. The enzyme catalyses L-seryl-[protein] + ATP = O-phospho-L-seryl-[protein] + ADP + H(+). It functions in the pathway carbohydrate degradation; glycolysis; pyruvate from D-glyceraldehyde 3-phosphate: step 2/5. Functionally, catalyzes one of the two ATP producing reactions in the glycolytic pathway via the reversible conversion of 1,3-diphosphoglycerate to 3-phosphoglycerate. Both L- and D- forms of purine and pyrimidine nucleotides can be used as substrates, but the activity is much lower on pyrimidines. In addition to its role as a glycolytic enzyme, it seems that PGK-1 acts as a polymerase alpha cofactor protein (primer recognition protein). Acts as a protein kinase when localized to the mitochondrion where it phosphorylates pyruvate dehydrogenase kinase PDK1 to inhibit pyruvate dehydrogenase complex activity and suppress the formation of acetyl-coenzyme A from pyruvate, and consequently inhibit oxidative phosphorylation and promote glycolysis. May play a role in sperm motility. This is Phosphoglycerate kinase 1 (PGK1) from Cricetulus griseus (Chinese hamster).